Consider the following 208-residue polypeptide: Imidazoleglycerol-phosphate dehydratase (208 aa).

The protein belongs to the imidazoleglycerol-phosphate dehydratase family.

The protein resides in the cytoplasm. It carries out the reaction D-erythro-1-(imidazol-4-yl)glycerol 3-phosphate = 3-(imidazol-4-yl)-2-oxopropyl phosphate + H2O. Its pathway is amino-acid biosynthesis; L-histidine biosynthesis; L-histidine from 5-phospho-alpha-D-ribose 1-diphosphate: step 6/9. This is Imidazoleglycerol-phosphate dehydratase from Prochlorococcus marinus (strain MIT 9211).